Reading from the N-terminus, the 365-residue chain is Putative tRNA 2'-phosphotransferase (365 aa).

Disordered regions lie at residues 1–35 (MYKN…IRPR) and 231–254 (LLDA…PESI). The segment covering 17–27 (SGTPATKSSSK) has biased composition (low complexity).

This sequence belongs to the KptA/TPT1 family.

It carries out the reaction 2'-phospho-[ligated tRNA] + NAD(+) = mature tRNA + ADP-alpha-D-ribose 1'',2''-cyclic phosphate + nicotinamide. In terms of biological role, catalyzes the last step of tRNA splicing, the transfer of the splice junction 2'-phosphate from ligated tRNA to NAD to produce ADP-ribose 1''-2'' cyclic phosphate. The protein is Putative tRNA 2'-phosphotransferase of Schizosaccharomyces pombe (strain 972 / ATCC 24843) (Fission yeast).